We begin with the raw amino-acid sequence, 136 residues long: Histone H3.2 (136 aa).

The tract at residues 1 to 45 (MARTKQTARKSTGGKAPRKQLATKAARKSAPATGGVKKPHRYRPG) is disordered. An Asymmetric dimethylarginine; by PRMT6; alternate modification is found at Arg-3. Arg-3 is subject to Citrulline; alternate. Thr-4 carries the phosphothreonine; by HASPIN and VRK1 modification. Position 5 is an allysine; alternate (Lys-5). Lys-5 is modified (N6,N6,N6-trimethyllysine; alternate). Lys-5 bears the N6,N6-dimethyllysine; alternate mark. Lys-5 is subject to N6-(2-hydroxyisobutyryl)lysine; alternate. At Lys-5 the chain carries N6-(beta-hydroxybutyryl)lysine; alternate. The residue at position 5 (Lys-5) is an N6-acetyllysine; alternate. Lys-5 is subject to N6-crotonyllysine; alternate. Lys-5 carries the N6-methyllysine; alternate modification. Position 6 is a 5-glutamyl dopamine; alternate (Gln-6). Gln-6 is subject to 5-glutamyl serotonin; alternate. At Thr-7 the chain carries Phosphothreonine; by PKC. A Citrulline; alternate modification is found at Arg-9. At Arg-9 the chain carries Symmetric dimethylarginine; by PRMT5; alternate. At Lys-10 the chain carries N6,N6,N6-trimethyllysine; alternate. Lys-10 carries the N6,N6-dimethyllysine; alternate modification. N6-(2-hydroxyisobutyryl)lysine; alternate is present on Lys-10. Residue Lys-10 is modified to N6-(beta-hydroxybutyryl)lysine; alternate. Lys-10 bears the N6-acetyllysine; alternate mark. Lys-10 carries the post-translational modification N6-crotonyllysine; alternate. Position 10 is an N6-methyllysine; alternate (Lys-10). Position 10 is an N6-lactoyllysine; alternate (Lys-10). Ser-11 is subject to ADP-ribosylserine; alternate. A Phosphoserine; alternate; by AURKB, AURKC, RPS6KA3, RPS6KA4 and RPS6KA5 modification is found at Ser-11. Thr-12 carries the phosphothreonine; by PKC modification. At Lys-15 the chain carries N6-(2-hydroxyisobutyryl)lysine; alternate. The residue at position 15 (Lys-15) is an N6-(beta-hydroxybutyryl)lysine; alternate. At Lys-15 the chain carries N6-acetyllysine; alternate. At Lys-15 the chain carries N6-lactoyllysine; alternate. Lys-15 is modified (N6-glutaryllysine; alternate). Lys-15 carries the N6-succinyllysine; alternate modification. Position 18 is a citrulline; alternate (Arg-18). Asymmetric dimethylarginine; by CARM1; alternate is present on Arg-18. Lys-19 and Lys-24 each carry N6-(2-hydroxyisobutyryl)lysine; alternate. N6-(beta-hydroxybutyryl)lysine; alternate is present on residues Lys-19 and Lys-24. Residues Lys-19 and Lys-24 each carry the N6-acetyllysine; alternate modification. Lys-19 and Lys-24 each carry N6-crotonyllysine; alternate. An N6-methyllysine; alternate mark is found at Lys-19 and Lys-24. Lys-19 and Lys-24 each carry N6-lactoyllysine; alternate. Lys-19 and Lys-24 each carry N6-glutaryllysine; alternate. Lys-19 and Lys-24 each carry N6-butyryllysine; alternate. Lys-19 is lipidated: N6-decanoyllysine. Arg-27 carries the post-translational modification Citrulline. Lys-28 bears the N6,N6,N6-trimethyllysine; alternate mark. Lys-28 carries the post-translational modification N6,N6-dimethyllysine; alternate. Lys-28 carries the N6-(2-hydroxyisobutyryl)lysine; alternate modification. Lys-28 carries the N6-acetyllysine; alternate modification. At Lys-28 the chain carries N6-crotonyllysine; alternate. The residue at position 28 (Lys-28) is an N6-methyllysine; alternate. Lys-28 carries the post-translational modification N6-lactoyllysine; alternate. Lys-28 is modified (N6-glutaryllysine; alternate). Ser-29 is subject to ADP-ribosylserine; alternate. At Ser-29 the chain carries Phosphoserine; alternate; by AURKB, AURKC and RPS6KA5. Position 37 is an N6,N6,N6-trimethyllysine; alternate (Lys-37). The residue at position 37 (Lys-37) is an N6,N6-dimethyllysine; alternate. Lys-37 bears the N6-(2-hydroxyisobutyryl)lysine; alternate mark. Lys-37 bears the N6-acetyllysine; alternate mark. Residue Lys-37 is modified to N6-methyllysine; alternate. Residue Lys-38 is modified to N6-methyllysine. Tyr-42 bears the Phosphotyrosine mark. Lys-57 carries the N6,N6,N6-trimethyllysine; alternate modification. Lys-57 carries the post-translational modification N6-(2-hydroxyisobutyryl)lysine; alternate. N6-(beta-hydroxybutyryl)lysine; alternate is present on Lys-57. N6-acetyllysine; alternate is present on Lys-57. Lys-57 bears the N6-crotonyllysine; alternate mark. The residue at position 57 (Lys-57) is an N6-lactoyllysine; alternate. An N6-glutaryllysine; alternate modification is found at Lys-57. Lys-57 carries the post-translational modification N6-succinyllysine; alternate. An N6-methyllysine; by EHMT2; alternate modification is found at Lys-57. The residue at position 58 (Ser-58) is a Phosphoserine. An N6-(2-hydroxyisobutyryl)lysine; alternate mark is found at Lys-65 and Lys-80. 2 positions are modified to N6-methyllysine; alternate: Lys-65 and Lys-80. Residue Lys-80 is modified to N6,N6,N6-trimethyllysine; alternate. Lys-80 is subject to N6,N6-dimethyllysine; alternate. Lys-80 is subject to N6-acetyllysine; alternate. An N6-lactoyllysine; alternate modification is found at Lys-80. Position 80 is an N6-glutaryllysine; alternate (Lys-80). At Lys-80 the chain carries N6-succinyllysine; alternate. At Thr-81 the chain carries Phosphothreonine. Phosphoserine is present on Ser-87. Thr-108 is subject to Phosphothreonine. Residue Cys-111 is the site of S-palmitoyl cysteine attachment. Lys-116 and Lys-123 each carry N6-acetyllysine; alternate. Lys-116 and Lys-123 each carry N6-glutaryllysine; alternate. Lys-123 carries the post-translational modification N6-(2-hydroxyisobutyryl)lysine; alternate. An N6-methyllysine; alternate modification is found at Lys-123. At Lys-123 the chain carries N6-succinyllysine; alternate.

Belongs to the histone H3 family. In terms of assembly, the nucleosome is a histone octamer containing two molecules each of H2A, H2B, H3 and H4 assembled in one H3-H4 heterotetramer and two H2A-H2B heterodimers. The octamer wraps approximately 147 bp of DNA. During nucleosome assembly the chaperone ASF1A interacts with the histone H3-H4 heterodimer (via C-terminus of H3); this interaction is direct. Interacts with DNAJC9, CHAF1A and CHAF1B. Interacts with NASP; NASP is a histone chaperone that stabilizes and maintains a soluble pool of Histone H3-H4 dimers. Post-translationally, acetylation is generally linked to gene activation. Acetylation on Lys-10 (H3K9ac) impairs methylation at Arg-9 (H3R8me2s). Acetylation on Lys-19 (H3K18ac) and Lys-24 (H3K24ac) favors methylation at Arg-18 (H3R17me). Acetylation at Lys-123 (H3K122ac) by EP300/p300 plays a central role in chromatin structure: localizes at the surface of the histone octamer and stimulates transcription, possibly by promoting nucleosome instability. Citrullination at Arg-9 (H3R8ci) and/or Arg-18 (H3R17ci) by PADI4 impairs methylation and represses transcription. In terms of processing, asymmetric dimethylation at Arg-18 (H3R17me2a) by CARM1 is linked to gene activation. Symmetric dimethylation at Arg-9 (H3R8me2s) by PRMT5 is linked to gene repression. Asymmetric dimethylation at Arg-3 (H3R2me2a) by PRMT6 is linked to gene repression and is mutually exclusive with H3 Lys-5 methylation (H3K4me2 and H3K4me3). H3R2me2a is present at the 3' of genes regardless of their transcription state and is enriched on inactive promoters, while it is absent on active promoters. Post-translationally, methylation at Lys-5 (H3K4me), Lys-37 (H3K36me) and Lys-80 (H3K79me) are linked to gene activation. Methylation at Lys-5 (H3K4me) facilitates subsequent acetylation of H3 and H4. Methylation at Lys-80 (H3K79me) is associated with DNA double-strand break (DSB) responses and is a specific target for TP53BP1. Methylation at Lys-10 (H3K9me) and Lys-28 (H3K27me) are linked to gene repression. Methylation at Lys-10 (H3K9me) is a specific target for HP1 proteins (CBX1, CBX3 and CBX5) and prevents subsequent phosphorylation at Ser-11 (H3S10ph) and acetylation of H3 and H4. Methylation at Lys-5 (H3K4me) and Lys-80 (H3K79me) require preliminary monoubiquitination of H2B at 'Lys-120'. Methylation at Lys-10 (H3K9me) and Lys-28 (H3K27me) are enriched in inactive X chromosome chromatin. Monomethylation at Lys-57 (H3K56me1) by EHMT2/G9A in G1 phase promotes interaction with PCNA and is required for DNA replication. Phosphorylated at Thr-4 (H3T3ph) by VRK1. Phosphorylated at Thr-4 (H3T3ph) by HASPIN during prophase and dephosphorylated during anaphase. Phosphorylation at Ser-11 (H3S10ph) by AURKB is crucial for chromosome condensation and cell-cycle progression during mitosis and meiosis. In addition phosphorylation at Ser-11 (H3S10ph) by RPS6KA4 and RPS6KA5 is important during interphase because it enables the transcription of genes following external stimulation, like mitogens, stress, growth factors or UV irradiation and result in the activation of genes, such as c-fos and c-jun. Phosphorylation at Ser-11 (H3S10ph), which is linked to gene activation, prevents methylation at Lys-10 (H3K9me) but facilitates acetylation of H3 and H4. Phosphorylation at Ser-11 (H3S10ph) by AURKB mediates the dissociation of HP1 proteins (CBX1, CBX3 and CBX5) from heterochromatin. Phosphorylation at Ser-11 (H3S10ph) is also an essential regulatory mechanism for neoplastic cell transformation. Phosphorylated at Ser-29 (H3S28ph) by MAP3K20 isoform 1, RPS6KA5 or AURKB during mitosis or upon ultraviolet B irradiation. Phosphorylation at Thr-7 (H3T6ph) by PRKCB is a specific tag for epigenetic transcriptional activation that prevents demethylation of Lys-5 (H3K4me) by LSD1/KDM1A. At centromeres, specifically phosphorylated at Thr-12 (H3T11ph) from prophase to early anaphase, by DAPK3 and PKN1. Phosphorylation at Thr-12 (H3T11ph) by PKN1 or isoform M2 of PKM (PKM2) is a specific tag for epigenetic transcriptional activation that promotes demethylation of Lys-10 (H3K9me) by KDM4C/JMJD2C. Phosphorylation at Tyr-42 (H3Y41ph) by JAK2 promotes exclusion of CBX5 (HP1 alpha) from chromatin. In terms of processing, monoubiquitinated by RAG1 in lymphoid cells, monoubiquitination is required for V(D)J recombination. Ubiquitinated by the CUL4-DDB-RBX1 complex in response to ultraviolet irradiation. This may weaken the interaction between histones and DNA and facilitate DNA accessibility to repair proteins. Post-translationally, lysine deamination at Lys-5 (H3K4all) to form allysine is mediated by LOXL2. Allysine formation by LOXL2 only takes place on H3K4me3 and results in gene repression. Crotonylation (Kcr) is specifically present in male germ cells and marks testis-specific genes in post-meiotic cells, including X-linked genes that escape sex chromosome inactivation in haploid cells. Crotonylation marks active promoters and enhancers and confers resistance to transcriptional repressors. It is also associated with post-meiotically activated genes on autosomes. In terms of processing, butyrylation of histones marks active promoters and competes with histone acetylation. It is present during late spermatogenesis. Post-translationally, succinylation at Lys-80 (H3K79succ) by KAT2A takes place with a maximum frequency around the transcription start sites of genes. It gives a specific tag for epigenetic transcription activation. Desuccinylation at Lys-123 (H3K122succ) by SIRT7 in response to DNA damage promotes chromatin condensation and double-strand breaks (DSBs) repair. Serine ADP-ribosylation by PARP1 or PARP2 constitutes the primary form of ADP-ribosylation of proteins in response to DNA damage. Serine ADP-ribosylation at Ser-11 (H3S10ADPr) promotes recruitment of CHD1L. H3S10ADPr is mutually exclusive with phosphorylation at Ser-11 (H3S10ph) and impairs acetylation at Lys-10 (H3K9ac). In terms of processing, serotonylated by TGM2 at Gln-6 (H3Q5ser) during serotonergic neuron differentiation. H3Q5ser is associated with trimethylation of Lys-5 (H3K4me3) and enhances general transcription factor IID (TFIID) complex-binding to H3K4me3, thereby facilitating transcription. Post-translationally, dopaminylated by TGM2 at Gln-6 (H3Q5dop) in ventral tegmental area (VTA) neurons. H3Q5dop mediates neurotransmission-independent role of nuclear dopamine by regulating relapse-related transcriptional plasticity in the reward system. Lactylated in macrophages by EP300/P300 by using lactoyl-CoA directly derived from endogenous or exogenous lactate, leading to stimulates gene transcription.

The protein resides in the nucleus. It localises to the chromosome. Core component of nucleosome. Nucleosomes wrap and compact DNA into chromatin, limiting DNA accessibility to the cellular machineries which require DNA as a template. Histones thereby play a central role in transcription regulation, DNA repair, DNA replication and chromosomal stability. DNA accessibility is regulated via a complex set of post-translational modifications of histones, also called histone code, and nucleosome remodeling. The chain is Histone H3.2 from Cricetulus longicaudatus (Long-tailed dwarf hamster).